Reading from the N-terminus, the 165-residue chain is Protein-export protein SecB (165 aa).

The protein belongs to the SecB family. Homotetramer, a dimer of dimers. One homotetramer interacts with 1 SecA dimer.

It is found in the cytoplasm. Its function is as follows. One of the proteins required for the normal export of preproteins out of the cell cytoplasm. It is a molecular chaperone that binds to a subset of precursor proteins, maintaining them in a translocation-competent state. It also specifically binds to its receptor SecA. The protein is Protein-export protein SecB of Ruegeria pomeroyi (strain ATCC 700808 / DSM 15171 / DSS-3) (Silicibacter pomeroyi).